The primary structure comprises 607 residues: MSKVRIYTLAKDLGVENARMLEILDGLGVAYKSVSSTIEEETVDLIKQILEEESAPQAQDSTPVAETPAAAQPAAPQAASSQPAAAQAAQAVAEPVAAPEPAVNEIPHRAPVVTIMGHVDHGKTSLLDYIRKTRVAAKEAGGITQHVGAFEAKTSKGKIVFIDTPGHEAFTTIRARGANVADIAIIVIAADDSLMPQTREAIAHAQAAKVPMIVAINKVDLPQADPERVKTDLTQLNLVPEEYGGDLIVVPVSAKTGEGVEDLLEYISLTAELEDLRADPKGPFSGVIIEGKVDRQAGVLATVMVQEGTLHVGDFLVVGENYGKIKAMTDSAGGRIKEAGPSTPVQVLGFSEVPASGEKVQSAKNEHAARDVIAARADVRRDQENARDRRKTQRTLEDIMGPIGEVRTVNLVLRADTQGSVEALQGILARKEGEDVKINVMLAGIGAPTEGDVLLASTAEATILCFSVTPSGSVTKMAENKGVDIKSYRIIYELIDEVDRLIKGNVEPVFEERYLGRAEVRMVIRHPKSGNIAGSYVTDGMFRRNAKAKVTRGKQTVYEGTIVGLKRFKDDVREVQTGYECGINLDWNDVMEGDIIEASEMVEVEQA.

Positions 54 to 93 are disordered; that stretch reads SAPQAQDSTPVAETPAAAQPAAPQAASSQPAAAQAAQAVA. Over residues 62–93 the composition is skewed to low complexity; that stretch reads TPVAETPAAAQPAAPQAASSQPAAAQAAQAVA. The tr-type G domain maps to 108–281; sequence HRAPVVTIMG…ELEDLRADPK (174 aa). The segment at 117–124 is G1; the sequence is GHVDHGKT. 117–124 contributes to the GTP binding site; the sequence is GHVDHGKT. Positions 142-146 are G2; sequence GITQH. The tract at residues 163–166 is G3; that stretch reads DTPG. GTP-binding positions include 163–167 and 217–220; these read DTPGH and NKVD. A G4 region spans residues 217 to 220; that stretch reads NKVD. The G5 stretch occupies residues 253–255; that stretch reads SAK.

Belongs to the TRAFAC class translation factor GTPase superfamily. Classic translation factor GTPase family. IF-2 subfamily.

It localises to the cytoplasm. Its function is as follows. One of the essential components for the initiation of protein synthesis. Protects formylmethionyl-tRNA from spontaneous hydrolysis and promotes its binding to the 30S ribosomal subunits. Also involved in the hydrolysis of GTP during the formation of the 70S ribosomal complex. The polypeptide is Translation initiation factor IF-2 (Deinococcus deserti (strain DSM 17065 / CIP 109153 / LMG 22923 / VCD115)).